Reading from the N-terminus, the 162-residue chain is Protein cornichon homolog 2 (162 aa).

At 1–10 (MAFTFAAFCY) the chain is on the cytoplasmic side. The helical transmembrane segment at 11–31 (MLTLVLCASLIFFIIWHIIAF) threads the bilayer. The Lumenal portion of the chain corresponds to 32 to 72 (DDLRTDFKDPIEQGNPSRARERIKNVERVCCLLRKLVVPEY). A helical transmembrane segment spans residues 73–93 (CIHGLFCLMFMCAAEWVTLGL). At 94–138 (NIPLLFYHLWRYFHRPADGSEVMFDPVSIMNVDILNYCQKEAWCK) the chain is on the cytoplasmic side. The helical transmembrane segment at 139-161 (LAFYLLSFFYYLYRVGATVRYVS) threads the bilayer. A topological domain (lumenal) is located at residue A162.

The protein belongs to the cornichon family.

The protein resides in the membrane. Functionally, regulates the trafficking and gating properties of AMPA-selective glutamate receptors (AMPARs). The protein is Protein cornichon homolog 2 (cnih2) of Xenopus laevis (African clawed frog).